A 485-amino-acid polypeptide reads, in one-letter code: Inosine-5'-monophosphate dehydrogenase (485 aa).

2 CBS domains span residues 97–154 (IIRD…VSDV) and 155–211 (MVRD…PDAS). NAD(+)-binding positions include Asp246 and 295-297 (GIG). The K(+) site is built by Gly297 and Gly299. Ser300 is a binding site for IMP. K(+) is bound at residue Cys302. Cys302 functions as the Thioimidate intermediate in the catalytic mechanism. IMP is bound by residues 335–337 (DGG), 358–359 (GS), and 382–386 (YRGMG). Arg398 serves as the catalytic Proton acceptor. Glu409 lines the IMP pocket. K(+) is bound by residues Glu463, Ser464, and His465.

Belongs to the IMPDH/GMPR family. In terms of assembly, homotetramer. K(+) is required as a cofactor.

The enzyme catalyses IMP + NAD(+) + H2O = XMP + NADH + H(+). Its pathway is purine metabolism; XMP biosynthesis via de novo pathway; XMP from IMP: step 1/1. With respect to regulation, mycophenolic acid (MPA) is a non-competitive inhibitor that prevents formation of the closed enzyme conformation by binding to the same site as the amobile flap. In contrast, mizoribine monophosphate (MZP) is a competitive inhibitor that induces the closed conformation. MPA is a potent inhibitor of mammalian IMPDHs but a poor inhibitor of the bacterial enzymes. MZP is a more potent inhibitor of bacterial IMPDH. Its function is as follows. Catalyzes the conversion of inosine 5'-phosphate (IMP) to xanthosine 5'-phosphate (XMP), the first committed and rate-limiting step in the de novo synthesis of guanine nucleotides, and therefore plays an important role in the regulation of cell growth. In Thermoplasma acidophilum (strain ATCC 25905 / DSM 1728 / JCM 9062 / NBRC 15155 / AMRC-C165), this protein is Inosine-5'-monophosphate dehydrogenase.